The primary structure comprises 606 residues: Prostaglandin G/H synthase 1 (606 aa).

Positions 1–30 (MSRSSPSLRLPVLLLLLLLLLLPPPPPVLP) are cleaved as a signal peptide. Residues 38–76 (PVNPCCYFPCQHQGVCVRVALDRYQCDCTRTGYSGPNCT) form the EGF-like domain. 4 disulfides stabilise this stretch: cysteine 42/cysteine 53, cysteine 43/cysteine 165, cysteine 47/cysteine 63, and cysteine 65/cysteine 75. Asparagine 74, asparagine 110, and asparagine 150 each carry an N-linked (GlcNAc...) asparagine glycan. The active-site Proton acceptor is the histidine 213. Catalysis depends on tyrosine 391, which acts as the For cyclooxygenase activity. Position 394 (histidine 394) interacts with heme b. Asparagine 416 is a glycosylation site (N-linked (GlcNAc...) asparagine). A disulfide bond links cysteine 575 and cysteine 581.

This sequence belongs to the prostaglandin G/H synthase family. In terms of assembly, homodimer. Requires heme b as cofactor.

Its subcellular location is the microsome membrane. It is found in the endoplasmic reticulum membrane. It catalyses the reaction (5Z,8Z,11Z,14Z)-eicosatetraenoate + AH2 + 2 O2 = prostaglandin H2 + A + H2O. It carries out the reaction (5Z,8Z,11Z,14Z)-eicosatetraenoate + 2 O2 = prostaglandin G2. The catalysed reaction is prostaglandin G2 + AH2 = prostaglandin H2 + A + H2O. The enzyme catalyses (9Z,12Z)-octadecadienoate + AH2 + O2 = (9R)-hydroxy-(10E,12Z)-octadecadienoate + A + H2O. It catalyses the reaction (9Z,12Z)-octadecadienoate + AH2 + O2 = (9S)-hydroxy-(10E,12Z)-octadecadienoate + A + H2O. It carries out the reaction (9Z,12Z)-octadecadienoate + AH2 + O2 = (13S)-hydroxy-(9Z,11E)-octadecadienoate + A + H2O. The catalysed reaction is (9Z,12Z)-octadecadienoate + AH2 + O2 = (13R)-hydroxy-(9Z,11E)-octadecadienoate + A + H2O. It functions in the pathway lipid metabolism; prostaglandin biosynthesis. The cyclooxygenase activity is inhibited by nonsteroidal anti-inflammatory drugs (NSAIDs) including ibuprofen, flurbiprofen, ketoprofen, naproxen, flurbiprofen, anirolac, fenclofenac and diclofenac. Dual cyclooxygenase and peroxidase that plays an important role in the biosynthesis pathway of prostanoids, a class of C20 oxylipins mainly derived from arachidonate ((5Z,8Z,11Z,14Z)-eicosatetraenoate, AA, C20:4(n-6)), with a particular role in the inflammatory response. The cyclooxygenase activity oxygenates AA to the hydroperoxy endoperoxide prostaglandin G2 (PGG2), and the peroxidase activity reduces PGG2 to the hydroxy endoperoxide prostaglandin H2 (PGH2), the precursor of all 2-series prostaglandins and thromboxanes. This complex transformation is initiated by abstraction of hydrogen at carbon 13 (with S-stereochemistry), followed by insertion of molecular O2 to form the endoperoxide bridge between carbon 9 and 11 that defines prostaglandins. The insertion of a second molecule of O2 (bis-oxygenase activity) yields a hydroperoxy group in PGG2 that is then reduced to PGH2 by two electrons. Involved in the constitutive production of prostanoids in particular in the stomach and platelets. In gastric epithelial cells, it is a key step in the generation of prostaglandins, such as prostaglandin E2 (PGE2), which plays an important role in cytoprotection. In platelets, it is involved in the generation of thromboxane A2 (TXA2), which promotes platelet activation and aggregation, vasoconstriction and proliferation of vascular smooth muscle cells. Can also use linoleate (LA, (9Z,12Z)-octadecadienoate, C18:2(n-6)) as substrate and produce hydroxyoctadecadienoates (HODEs) in a regio- and stereospecific manner, being (9R)-HODE ((9R)-hydroxy-(10E,12Z)-octadecadienoate) and (13S)-HODE ((13S)-hydroxy-(9Z,11E)-octadecadienoate) its major products. This chain is Prostaglandin G/H synthase 1 (PTGS1), found in Oryctolagus cuniculus (Rabbit).